We begin with the raw amino-acid sequence, 312 residues long: Methionyl-tRNA formyltransferase (312 aa).

109-112 (SLLP) contributes to the (6S)-5,6,7,8-tetrahydrofolate binding site.

Belongs to the Fmt family.

The catalysed reaction is L-methionyl-tRNA(fMet) + (6R)-10-formyltetrahydrofolate = N-formyl-L-methionyl-tRNA(fMet) + (6S)-5,6,7,8-tetrahydrofolate + H(+). Functionally, attaches a formyl group to the free amino group of methionyl-tRNA(fMet). The formyl group appears to play a dual role in the initiator identity of N-formylmethionyl-tRNA by promoting its recognition by IF2 and preventing the misappropriation of this tRNA by the elongation apparatus. The protein is Methionyl-tRNA formyltransferase of Nitrosospira multiformis (strain ATCC 25196 / NCIMB 11849 / C 71).